Consider the following 93-residue polypeptide: Acylphosphatase (93 aa).

Residues 6–93 (RAHVFISGRV…GEERGFSIIW (88 aa)) form the Acylphosphatase-like domain. Residues arginine 21 and asparagine 39 contribute to the active site.

This sequence belongs to the acylphosphatase family.

The catalysed reaction is an acyl phosphate + H2O = a carboxylate + phosphate + H(+). The protein is Acylphosphatase (acyP) of Roseiflexus sp. (strain RS-1).